Consider the following 226-residue polypeptide: Apoptosis regulator OPG045 (226 aa).

It belongs to the orthopoxvirus OPG045 family. In terms of assembly, homodimer. Interacts with host pro-apoptotic protein BCL2L11 (via BH3 domain). Interacts with host NLRP1. Interacts with host BAK.

It is found in the host mitochondrion outer membrane. Its subcellular location is the host cytoplasm. Functionally, plays a role in evading host innate immune response by inhibiting host inflammasome activation. Interacts with and inhibits NLR-mediated interleukin-1 beta/IL1B production in infected cells. At the host mitochondria outer membrane, interacts with the BH3 domain of host BAK and prevents BAK from binding active BAX. In turn, host apoptosis is inhibited. In Homo sapiens (Human), this protein is Apoptosis regulator OPG045 (OPG045).